We begin with the raw amino-acid sequence, 692 residues long: Ribosome-releasing factor 2, mitochondrial (692 aa).

A mitochondrion-targeting transit peptide spans 1–29 (MLKYAWQSGPKQRNRWLWHLSNQIWKRSY). Residues 31-310 (SKIRNIGILA…AVNAYLPAPE (280 aa)) enclose the tr-type G domain. Residues 40-47 (AHIDAGKT), 104-108 (DTPGH), and 158-161 (NKMD) contribute to the GTP site.

It belongs to the TRAFAC class translation factor GTPase superfamily. Classic translation factor GTPase family. EF-G/EF-2 subfamily.

It is found in the mitochondrion. In terms of biological role, mitochondrial GTPase that mediates the disassembly of ribosomes from messenger RNA at the termination of mitochondrial protein biosynthesis. Not involved in the GTP-dependent ribosomal translocation step during translation elongation. In Drosophila sechellia (Fruit fly), this protein is Ribosome-releasing factor 2, mitochondrial.